A 1034-amino-acid chain; its full sequence is Error-prone DNA polymerase (1034 aa).

It belongs to the DNA polymerase type-C family. DnaE2 subfamily.

It is found in the cytoplasm. The enzyme catalyses DNA(n) + a 2'-deoxyribonucleoside 5'-triphosphate = DNA(n+1) + diphosphate. In terms of biological role, DNA polymerase involved in damage-induced mutagenesis and translesion synthesis (TLS). It is not the major replicative DNA polymerase. This Pseudomonas fluorescens (strain ATCC BAA-477 / NRRL B-23932 / Pf-5) protein is Error-prone DNA polymerase.